A 367-amino-acid polypeptide reads, in one-letter code: Leu/Ile/Val-binding protein (367 aa).

The N-terminal stretch at 1-23 (MNIKGKALLAGCIALAFSNMALA) is a signal peptide. Cysteines 76 and 101 form a disulfide.

The protein belongs to the leucine-binding protein family.

It is found in the periplasm. Functionally, this protein is a component of the leucine, isoleucine, valine, (threonine) transport system, which is one of the two periplasmic binding protein-dependent transport systems of the high-affinity transport of the branched-chain amino acids. This is Leu/Ile/Val-binding protein (livJ) from Escherichia coli O157:H7.